The sequence spans 145 residues: uncharacterized protein (145 aa).

The interval 71–95 is disordered; it reads GARGRGRTYTKGGSSRSPASWAEQG.

This is an uncharacterized protein from Homo sapiens (Human).